Here is a 311-residue protein sequence, read N- to C-terminus: MKTSQNLVSVEQFSNQDVMAYLKLAQAFKNGKTVQLSQPTFAMNLFFENSTRTHTSFEMAERRLGLQVIPFDPKTSSVTKGESLLDTLKTIEAIGVNLAVVRHPRDRYYQPLLDAGFDMSLINAGDGSGQHPSQSLLDMLTIYEEFGHFDGLKIAIVGDLAHSRVARSNMALLTQLGAQVYFGGPKEWYGRDFEAYGEYQTMDQLVATMDVMMLLRVQHERLSQVNNQTFDASAYHQQYGLTAERAARMPKHAIIMHPAPVNRGVELASDLVEAPQSRIFQQMTNGVYIRMAMVASVLAHQGLISATQVEV.

Residues R52 and T53 each contribute to the carbamoyl phosphate site. K80 contributes to the L-aspartate binding site. Residues R102, H131, and Q134 each contribute to the carbamoyl phosphate site. R164 and R216 together coordinate L-aspartate. Carbamoyl phosphate contacts are provided by A259 and P260.

Belongs to the aspartate/ornithine carbamoyltransferase superfamily. ATCase family. Heterododecamer (2C3:3R2) of six catalytic PyrB chains organized as two trimers (C3), and six regulatory PyrI chains organized as three dimers (R2).

The catalysed reaction is carbamoyl phosphate + L-aspartate = N-carbamoyl-L-aspartate + phosphate + H(+). Its pathway is pyrimidine metabolism; UMP biosynthesis via de novo pathway; (S)-dihydroorotate from bicarbonate: step 2/3. In terms of biological role, catalyzes the condensation of carbamoyl phosphate and aspartate to form carbamoyl aspartate and inorganic phosphate, the committed step in the de novo pyrimidine nucleotide biosynthesis pathway. The sequence is that of Aspartate carbamoyltransferase catalytic subunit from Lactiplantibacillus plantarum (strain ATCC BAA-793 / NCIMB 8826 / WCFS1) (Lactobacillus plantarum).